A 371-amino-acid polypeptide reads, in one-letter code: DNA-directed RNA polymerase subunit alpha (371 aa).

Positions 1-248 are alpha N-terminal domain (alpha-NTD); it reads MSVKYGKFEM…KHFEVFNQFN (248 aa). The alpha C-terminal domain (alpha-CTD) stretch occupies residues 264 to 371; that stretch reads DQDELMDKLS…KELVKHEDAK (108 aa).

This sequence belongs to the RNA polymerase alpha chain family. As to quaternary structure, homodimer. The RNAP catalytic core consists of 2 alpha, 1 beta, 1 beta' and 1 omega subunit. When a sigma factor is associated with the core the holoenzyme is formed, which can initiate transcription.

The catalysed reaction is RNA(n) + a ribonucleoside 5'-triphosphate = RNA(n+1) + diphosphate. In terms of biological role, DNA-dependent RNA polymerase catalyzes the transcription of DNA into RNA using the four ribonucleoside triphosphates as substrates. This chain is DNA-directed RNA polymerase subunit alpha, found in Protochlamydia amoebophila (strain UWE25).